The following is a 663-amino-acid chain: Probable acetolactate synthase 2, chloroplastic (663 aa).

The segment covering 1–26 (MAAAAAAASLSVSDAAAKLPKPGGQV) has biased composition (low complexity). The tract at residues 1–56 (MAAAAAAASLSVSDAAAKLPKPGGQVQRRRDRDRPRVDAAACTRDSRRPTRERCST) is disordered. The N-terminal 79 residues, 1–79 (MAAAAAAASL…TPVRAPVRTR (79 aa)), are a transit peptide targeting the chloroplast. Composition is skewed to basic and acidic residues over residues 28-37 (RRRDRDRPRV) and 44-54 (RDSRRPTRERC). Position 132 (Glu-132) interacts with thiamine diphosphate. A disulfide bridge links Cys-152 with Cys-298. FAD-binding positions include Arg-234, 340-361 (HGTV…LGVR), and 383-402 (DIDP…ICAD). The segment at 478–558 (QHQMWATQHY…VKVMVLNNQH (81 aa)) is thiamine pyrophosphate binding. Mg(2+)-binding residues include Asp-529 and Asn-556.

This sequence belongs to the TPP enzyme family. Requires Mg(2+) as cofactor. The cofactor is thiamine diphosphate.

Its subcellular location is the plastid. The protein localises to the chloroplast. It carries out the reaction 2 pyruvate + H(+) = (2S)-2-acetolactate + CO2. Its pathway is amino-acid biosynthesis; L-isoleucine biosynthesis; L-isoleucine from 2-oxobutanoate: step 1/4. It participates in amino-acid biosynthesis; L-valine biosynthesis; L-valine from pyruvate: step 1/4. The chain is Probable acetolactate synthase 2, chloroplastic (ALS2) from Oryza sativa subsp. japonica (Rice).